Consider the following 191-residue polypeptide: Adenine phosphoribosyltransferase (191 aa).

This sequence belongs to the purine/pyrimidine phosphoribosyltransferase family. Homodimer.

Its subcellular location is the cytoplasm. It carries out the reaction AMP + diphosphate = 5-phospho-alpha-D-ribose 1-diphosphate + adenine. It functions in the pathway purine metabolism; AMP biosynthesis via salvage pathway; AMP from adenine: step 1/1. In terms of biological role, catalyzes a salvage reaction resulting in the formation of AMP, that is energically less costly than de novo synthesis. This is Adenine phosphoribosyltransferase from Bordetella bronchiseptica (strain ATCC BAA-588 / NCTC 13252 / RB50) (Alcaligenes bronchisepticus).